The chain runs to 181 residues: Akirin-2 (181 aa).

The interval 18–48 (SPAASPKRRRCAPLSPSGPSPQKYLRLEPSP) is disordered. The short motif at 23-28 (PKRRRC) is the Nuclear localization signal element. Residues 178–181 (SYVS) carry the SYVS motif motif.

Belongs to the akirin family. In terms of assembly, homodimer. Interacts with actl6a/baf53a. Interacts with gmnn.

The protein localises to the nucleus. Molecular adapter that acts as a bridge between a variety of multiprotein complexes, and which is involved in embryonic development, immunity, myogenesis and brain development. Plays a key role in nuclear protein degradation by promoting import of proteasomes into the nucleus: acts by bridging fully assembled 20S proteasomes with nuclear import receptor ipo9. Involved in both neural precursor maintenance and terminal neural differentiation: bridges gmnn and actl6a/baf53a in neural progenitor cells, antagonizing the activity of gmnn, thereby suppressing sox2 expression. Also required for proper activation of neurod1 and neuronal differentiation. Involved in myogenesis: required for skeletal muscle formation and skeletal development, possibly by regulating expression of muscle differentiation factors. The polypeptide is Akirin-2 (Xenopus laevis (African clawed frog)).